The sequence spans 136 residues: Large ribosomal subunit protein uL16 (136 aa).

The protein belongs to the universal ribosomal protein uL16 family. In terms of assembly, part of the 50S ribosomal subunit.

In terms of biological role, binds 23S rRNA and is also seen to make contacts with the A and possibly P site tRNAs. This chain is Large ribosomal subunit protein uL16, found in Pasteurella multocida (strain Pm70).